Consider the following 107-residue polypeptide: ATP-dependent Clp protease adapter protein ClpS (107 aa).

It belongs to the ClpS family. Binds to the N-terminal domain of the chaperone ClpA.

In terms of biological role, involved in the modulation of the specificity of the ClpAP-mediated ATP-dependent protein degradation. The chain is ATP-dependent Clp protease adapter protein ClpS from Acinetobacter baylyi (strain ATCC 33305 / BD413 / ADP1).